A 232-amino-acid polypeptide reads, in one-letter code: Orotidine 5'-phosphate decarboxylase (232 aa).

Residues Asp-11, Lys-33, 60–69 (DLKFHDIPHT), Thr-119, Arg-180, Gln-189, Gly-209, and Arg-210 each bind substrate. The active-site Proton donor is the Lys-62.

Belongs to the OMP decarboxylase family. Type 1 subfamily. As to quaternary structure, homodimer.

The catalysed reaction is orotidine 5'-phosphate + H(+) = UMP + CO2. Its pathway is pyrimidine metabolism; UMP biosynthesis via de novo pathway; UMP from orotate: step 2/2. Its function is as follows. Catalyzes the decarboxylation of orotidine 5'-monophosphate (OMP) to uridine 5'-monophosphate (UMP). This is Orotidine 5'-phosphate decarboxylase from Nitrosococcus oceani (strain ATCC 19707 / BCRC 17464 / JCM 30415 / NCIMB 11848 / C-107).